The sequence spans 433 residues: Glycoprotein U21 (433 aa).

Residues 1–364 are Lumenal-facing; the sequence is MMICLVFLCV…SAMLSFAEMT (364 aa). Asn164 carries N-linked (GlcNAc...) asparagine; by host glycosylation. Residues 365–385 traverse the membrane as a helical segment; sequence SIILNLMFMGAVAVSVGILGI. Over 386-433 the chain is Cytoplasmic; it reads SCFVGLKEIIYFIFVSVDYMWPFCDTLLTTAVNCFFKGRTFLRRELKI.

The protein belongs to the herpesviruses U21 family.

The protein localises to the host endoplasmic reticulum membrane. It localises to the host lysosome membrane. Its function is as follows. Plays a role in escape from immune detection by associating with and diverting properly folded class I MHC molecules to an endolysosomal compartment, effectively removing them from the cell surface. In consequence, surface class I molecules are down-regulated and infected cells are masked for immune recognition by cytotoxic T lymphocytes. Also plays a role in the down-regulation of the host stress-induced NKG2D ligand UBPL3, which enables immune cells expressing the NKG2D receptor to recognize and annihilate infected cells prior to viral spread. This Homo sapiens (Human) protein is Glycoprotein U21 (U21).